The chain runs to 520 residues: Pantetheine hydrolase VNN2 (520 aa).

The N-terminal stretch at 1-22 is a signal peptide; sequence MVTSSFPISVAVFALITLQVGT. The CN hydrolase domain maps to 31-306; it reads YEHAVILPNK…GKLLLSEVDS (276 aa). N-linked (GlcNAc...) asparagine glycosylation is present at Asn39. Glu80 (proton acceptor) is an active-site residue. Lys179 serves as the catalytic Proton donor. Cys211 functions as the Nucleophile in the catalytic mechanism. 5 N-linked (GlcNAc...) asparagine glycosylation sites follow: Asn273, Asn347, Asn357, Asn411, and Asn468. The GPI-anchor amidated cysteine moiety is linked to residue Cys493. A propeptide spans 494–520 (removed in mature form); sequence GTSNSAITYLLIFILLMIIALQNIVML.

The protein belongs to the carbon-nitrogen hydrolase superfamily. BTD/VNN family. Widely expressed with higher expression in spleen and blood.

The protein resides in the cell membrane. The catalysed reaction is (R)-pantetheine + H2O = cysteamine + (R)-pantothenate. Amidohydrolase that hydrolyzes specifically one of the carboamide linkages in D-pantetheine thus recycling pantothenic acid (vitamin B5) and releasing cysteamine. Involved in the thymus homing of bone marrow cells. May regulate beta-2 integrin-mediated cell adhesion, migration and motility of neutrophil. In Homo sapiens (Human), this protein is Pantetheine hydrolase VNN2.